The primary structure comprises 288 residues: Small ribosomal subunit biogenesis GTPase RsgA (288 aa).

One can recognise a CP-type G domain in the interval T61–L218. Residues N110–D113 and G161–T169 each bind GTP. Residues C242, C247, H249, and C255 each coordinate Zn(2+).

This sequence belongs to the TRAFAC class YlqF/YawG GTPase family. RsgA subfamily. Monomer. Associates with 30S ribosomal subunit, binds 16S rRNA. Zn(2+) serves as cofactor.

Its subcellular location is the cytoplasm. Functionally, one of several proteins that assist in the late maturation steps of the functional core of the 30S ribosomal subunit. Helps release RbfA from mature subunits. May play a role in the assembly of ribosomal proteins into the subunit. Circularly permuted GTPase that catalyzes slow GTP hydrolysis, GTPase activity is stimulated by the 30S ribosomal subunit. The polypeptide is Small ribosomal subunit biogenesis GTPase RsgA (Clostridium acetobutylicum (strain ATCC 824 / DSM 792 / JCM 1419 / IAM 19013 / LMG 5710 / NBRC 13948 / NRRL B-527 / VKM B-1787 / 2291 / W)).